The sequence spans 246 residues: High mobility group protein 1 (246 aa).

The segment at residues 106-179 is a DNA-binding region (HMG box); that stretch reads PKKPLTVFFA…NYQREKSKYL (74 aa). The tract at residues 179–246 is disordered; it reads LEAKKNGTLP…KKKDKSNSSI (68 aa). Residues 214-227 are compositionally biased toward basic and acidic residues; sequence PVEKRPHDDDGSSE. The span at 228-238 shows a compositional bias: basic residues; sequence KKKKKKKKDKK.

Interacts with FPR1. Interacts with an unidentified DNA helicase. Associates with rDNA.

It localises to the nucleus. The protein resides in the nucleolus. In terms of biological role, DNA-binding protein that is probably part of the rDNA transcription apparatus. Acts synergetically with the RPA49 subunit of RNA polymerase I during rDNA transcription. May participate in mutagenesis control. The polypeptide is High mobility group protein 1 (HMO1) (Saccharomyces cerevisiae (strain ATCC 204508 / S288c) (Baker's yeast)).